The primary structure comprises 447 residues: 3-O-methyltransferase 2 (447 aa).

S-adenosyl-L-methionine is bound by residues 264 to 265 (GG), aspartate 287, 318 to 319 (DF), and arginine 334. Histidine 338 acts as the Proton acceptor in catalysis.

The protein belongs to the class I-like SAM-binding methyltransferase superfamily. Cation-independent O-methyltransferase family. COMT subfamily.

S-adenosyl-L-methionine-dependent methyltransferase that preferentially catalyzes the methylation of 3-OH phenolic compounds like isovanillic acid and 3-OH-4-Met cinnamic acid. May play a role in promoting lignin degradation by methylating and inactivating free-hydroxyl phenolic compounds, products of lignin cleavage which are known inhibitors of lignin peroxidases. This is 3-O-methyltransferase 2 from Phanerochaete chrysosporium (strain RP-78 / ATCC MYA-4764 / FGSC 9002) (White-rot fungus).